A 364-amino-acid chain; its full sequence is Chorismate synthase (364 aa).

NADP(+) is bound by residues Arg-48 and Arg-54. FMN is bound by residues 125 to 127 (RSS), 238 to 239 (NA), Gly-278, 293 to 297 (KPTSS), and Arg-319.

The protein belongs to the chorismate synthase family. In terms of assembly, homotetramer. Requires FMNH2 as cofactor.

The enzyme catalyses 5-O-(1-carboxyvinyl)-3-phosphoshikimate = chorismate + phosphate. It functions in the pathway metabolic intermediate biosynthesis; chorismate biosynthesis; chorismate from D-erythrose 4-phosphate and phosphoenolpyruvate: step 7/7. Catalyzes the anti-1,4-elimination of the C-3 phosphate and the C-6 proR hydrogen from 5-enolpyruvylshikimate-3-phosphate (EPSP) to yield chorismate, which is the branch point compound that serves as the starting substrate for the three terminal pathways of aromatic amino acid biosynthesis. This reaction introduces a second double bond into the aromatic ring system. The protein is Chorismate synthase of Shewanella woodyi (strain ATCC 51908 / MS32).